The sequence spans 145 residues: Basic phospholipase A2 P'513 (145 aa).

A signal peptide spans 1–21; sequence MYPAHLLLLLAVCVSLLGASA. Positions 22–27 are excised as a propeptide; sequence IPPLPL. 7 cysteine pairs are disulfide-bonded: cysteine 38–cysteine 98, cysteine 54–cysteine 144, cysteine 56–cysteine 72, cysteine 71–cysteine 125, cysteine 78–cysteine 118, cysteine 87–cysteine 111, and cysteine 105–cysteine 116. Tyrosine 55, glycine 57, and glycine 59 together coordinate Ca(2+). Histidine 75 is a catalytic residue. Ca(2+) is bound at residue aspartate 76. Aspartate 119 is a catalytic residue.

This sequence belongs to the phospholipase A2 family. Group I subfamily. D49 sub-subfamily. The cofactor is Ca(2+). Expressed by the venom gland.

It is found in the secreted. It catalyses the reaction a 1,2-diacyl-sn-glycero-3-phosphocholine + H2O = a 1-acyl-sn-glycero-3-phosphocholine + a fatty acid + H(+). In terms of biological role, PLA2 catalyzes the calcium-dependent hydrolysis of the 2-acyl groups in 3-sn-phosphoglycerides. The sequence is that of Basic phospholipase A2 P'513 from Laticauda laticaudata (Blue-ringed sea krait).